The following is a 630-amino-acid chain: MALVSILPLSSKSVLHKSWIVSTYEHKAISRTIPNLGLRGRGKSVTHSLRMSLSTAVSDDHGVQRRIVEFHSNLWDDDFIQSLSTPYGAPSYRERADRLIVEVKGIFTSISAEDGELITPLNDLIQRLLMVDNVERLGIDRHFKNEIKAALDYVYSYWNEKGIGSGSDSGVADLNSTALGFRILRLHGYSVSSDVLEHFKEEKEKGQFVCSAIQTEEEIKSVLNLFRASLIAFPGEKVMEEAEIFSKIYLKEALQNIAVSSLSREIEYVLEDGWQTNMPRLETRNYIDVLGENDRDETLYMNMEKLLEIAKLEFNIFHSLQQRELKDLSRWWKDSGFSHLTFSRHRHVEFYALASCIETDRKHSGFRLGFAKMCHLITVLDDIYDTFGTMEELELFTAAFKRWDPSATDLLPEYMKGLYMVVYETVNEIAREADKSQGRETLNDARRAWEAYLDSYMKEAEWISSGYLPTFEEYMETSKVSFGYRIFALQPILTMDVPLTHHILQEIDFPLRFNDLICSILRLKNDTRCYKADRARGEEASCISCYMKENPGSTEEDAINHINAMVNNLIKEVNWELLRQDGTAHIACKKHAFDILKGSLHGYKYRDGFSVANKETKNWVRRTVLESVPL.

The N-terminal 52 residues, M1–S52, are a transit peptide targeting the chloroplast. Mg(2+) is bound by residues D381, D385, N525, and D533. Residues D381 to D385 carry the DDXXD motif motif.

The protein belongs to the terpene synthase family. Tpsd subfamily. The cofactor is Mg(2+). Mn(2+) is required as a cofactor. Requires K(+) as cofactor.

The protein localises to the plastid. It localises to the chloroplast. The catalysed reaction is (2E)-geranyl diphosphate = terpinolene + diphosphate. It participates in terpene metabolism; oleoresin biosynthesis. In terms of biological role, involved in defensive oleoresin formation in conifers in response to insect attack or other injury. Involved in monoterpene (C10) olefins biosynthesis. This is Terpinolene synthase, chloroplastic (ag9) from Abies grandis (Grand fir).